Reading from the N-terminus, the 191-residue chain is Putative RNA-binding protein EEED8.4 (191 aa).

Positions lysine 55–threonine 132 constitute an RRM domain. A disordered region spans residues glycine 136 to proline 160.

In Caenorhabditis elegans, this protein is Putative RNA-binding protein EEED8.4.